A 188-amino-acid chain; its full sequence is GTPase KRas (188 aa).

Residues 10-18 (GAGGVGKSA), 29-35 (VDEYDPT), 59-60 (AG), and 116-119 (NKYD) contribute to the GTP site. The Effector region signature appears at 32-40 (YDPTIEDSY). The tract at residues 167–188 (KEKMSKEGKKKKKKSKTKCILM) is disordered. C185 is subject to Cysteine methyl ester. The S-farnesyl cysteine moiety is linked to residue C185. Positions 186 to 188 (ILM) are cleaved as a propeptide — removed in mature form.

Belongs to the small GTPase superfamily. Ras family.

It localises to the cell membrane. Its subcellular location is the cytoplasm. The catalysed reaction is GTP + H2O = GDP + phosphate + H(+). With respect to regulation, alternates between an inactive form bound to GDP and an active form bound to GTP. Activated by a guanine nucleotide-exchange factor (GEF) and inactivated by a GTPase-activating protein (GAP). Its function is as follows. Ras proteins bind GDP/GTP and possess intrinsic GTPase activity. Plays an important role in the regulation of cell proliferation. May play a role in promoting oncogenic events by inducing transcriptional silencing of tumor suppressor genes (TSGs). The chain is GTPase KRas (kras) from Kryptolebias marmoratus (Mangrove killifish).